The sequence spans 345 residues: Protein RecA (345 aa).

Residue 65-72 (GPESSGKT) participates in ATP binding.

The protein belongs to the RecA family.

The protein resides in the cytoplasm. Its function is as follows. Can catalyze the hydrolysis of ATP in the presence of single-stranded DNA, the ATP-dependent uptake of single-stranded DNA by duplex DNA, and the ATP-dependent hybridization of homologous single-stranded DNAs. It interacts with LexA causing its activation and leading to its autocatalytic cleavage. The sequence is that of Protein RecA from Campylobacter fetus subsp. fetus (strain 82-40).